Consider the following 483-residue polypeptide: BTB/POZ domain and ankyrin repeat-containing protein COCH (483 aa).

Residues 25 to 105 (SDVVFSVEGR…LYSGQVSIVP (81 aa)) form the BTB domain. The C2HC NPR-type zinc-finger motif lies at 111 to 125 (RPNCGDRGCWHTHCT). Residues cysteine 114, cysteine 119, histidine 121, and cysteine 124 each contribute to the Zn(2+) site. ANK repeat units lie at residues 249-278 (QKIRRMRRALDSSDVELVKLMVMGEGLNLD), 279-308 (EALALPYAVESCSREVVKALLELGAADVNF), 313-342 (TGKTPLHIAAEMVSPDMVAVLLDHHADPNV), and 346-380 (DGVTPLDILRTLTSDFLFKGAVPGLTHIEPNKLRL). Disordered regions lie at residues 395-435 (EEGN…NSNM) and 450-483 (MSTSRLDSGDDDHNSNQREAMNPSMYHHHHSHDY). The span at 398-414 (NNNNNANNNNTGSSATN) shows a compositional bias: low complexity. Over residues 456-465 (DSGDDDHNSN) the composition is skewed to basic and acidic residues.

Belongs to the plant 'ANKYRIN-BTB/POZ' family. 'NOOT-BOP-COCH-like' (NBCL) subfamily. Homodimer.

The protein localises to the nucleus. It localises to the cytoplasm. It is found in the cell membrane. The protein operates within protein modification; protein ubiquitination. Its function is as follows. May act as a substrate-specific adapter of an E3 ubiquitin-protein ligase complex (CUL3-RBX1-BTB) which mediates the ubiquitination and subsequent proteasomal degradation of target proteins. Transcriptional co-regulator involved in the promotion of leaf and floral meristem fate and determinacy. Promotes normal stipule growth and development. Required for the abscission of senescent organs, probably by regulating the cell wall disorganization in abscission zones (AZs, e.g. pulvini at the base of leaves). Down-regulates UNI expression in primordia of leaves and secondary inflorescences, and thereby controls their sizes and/or structures. Involved in the coordination of the symbiotic nodule developmental program. Promotes the formation of root nodules by interacting directly with APP1 to modulate the expression of the nuclear transcription factor Y subunit (NF-YA1), a key nodulin. Necessary for the robust maintenance of nodule identity throughout the nodule developmental program. In Pisum sativum (Garden pea), this protein is BTB/POZ domain and ankyrin repeat-containing protein COCH.